Here is a 199-residue protein sequence, read N- to C-terminus: Recombination protein RecR (199 aa).

Residues 58-73 form a C4-type zinc finger; the sequence is CSVCTNLTDRDPCRIC. The Toprim domain maps to 81 to 176; that stretch reads AVICVVEEPR…KVTRIAHGLP (96 aa).

It belongs to the RecR family.

In terms of biological role, may play a role in DNA repair. It seems to be involved in an RecBC-independent recombinational process of DNA repair. It may act with RecF and RecO. The chain is Recombination protein RecR from Heliobacterium modesticaldum (strain ATCC 51547 / Ice1).